The sequence spans 146 residues: Hemoglobin subunit beta (146 aa).

The Globin domain maps to 2–146 (FLTAEEKSLV…VANALAHKYH (145 aa)). At Ser44 the chain carries Phosphoserine. Lys59 is modified (N6-acetyllysine). His63 lines the heme b pocket. The residue at position 82 (Lys82) is an N6-acetyllysine. A heme b-binding site is contributed by His92. An S-nitrosocysteine modification is found at Cys93. Position 144 is an N6-acetyllysine (Lys144).

The protein belongs to the globin family. As to quaternary structure, heterotetramer of two alpha chains and two beta chains. As to expression, red blood cells.

Functionally, involved in oxygen transport from the lung to the various peripheral tissues. The protein is Hemoglobin subunit beta (HBB) of Proteles cristata (Aardwolf).